The following is a 311-amino-acid chain: Aquaporin Lacbi1:392091 (311 aa).

The Cytoplasmic portion of the chain corresponds to 1-16 (MHPQVASLFDNVYEDL). The helical transmembrane segment at 17 to 37 (AAATLEFIGTAFFLLFGLGGI) threads the bilayer. Residues 38-56 (QASTAEDTASGQPPASGIE) lie on the Extracellular side of the membrane. The chain crosses the membrane as a helical span at residues 57-77 (HVLYISTCMGLSLVVSAWLFF). A topological domain (cytoplasmic) is located at residue arginine 78. A helical membrane pass occupies residues 79-99 (VTGGLFNPNISFALLLVGGLK). An NPA 1 motif is present at residues 85 to 87 (NPN). A topological domain (extracellular) is located at residue proline 100. A helical transmembrane segment spans residues 101–121 (LRFVLFCIAQLTGAIAGAAIV). The Cytoplasmic segment spans residues 122-143 (RGLTSAPLSVNNVLQQGTSAAQ). The chain crosses the membrane as a helical span at residues 144–164 (GVFIEMFITAALVLSVLMLAA). Residues 165–168 (EKHE) lie on the Extracellular side of the membrane. A helical membrane pass occupies residues 169–189 (ATPFAPVGIGLTLFACHLFAV). Residues 190–215 (YYTGAAMNSARAFGPAVISGFPEPQH) are Cytoplasmic-facing. Positions 197 to 199 (NSA) match the NPA 2 motif. Residues 216–236 (WVYWVGPFLGSLLGAGFYATL) traverse the membrane as a helical segment. The Extracellular portion of the chain corresponds to 237 to 311 (KHYKYWHLNP…TSSRTNFSPV (75 aa)). Residues 276–311 (DEETRNGCASNEEGVRATGDEKSSNATSSRTNFSPV) form a disordered region. Residues 288–298 (EGVRATGDEKS) are compositionally biased toward basic and acidic residues. Residues 299–311 (SNATSSRTNFSPV) are compositionally biased toward polar residues. Asparagine 300 is a glycosylation site (N-linked (GlcNAc...) asparagine).

This sequence belongs to the MIP/aquaporin (TC 1.A.8) family.

It localises to the membrane. It catalyses the reaction H2O(in) = H2O(out). The enzyme catalyses NH4(+)(in) = NH4(+)(out). In terms of biological role, water channel required to facilitate the transport of water across membranes. Also enables low but statistically significant ammonium permeability. May be involved in fungal nitrogen (ammonium) support of the plant host in symbiosis. The protein is Aquaporin Lacbi1:392091 of Laccaria bicolor (strain S238N-H82 / ATCC MYA-4686) (Bicoloured deceiver).